Reading from the N-terminus, the 327-residue chain is Tetraspanin-4 (327 aa).

Residues 1-6 (MRSRSN) are Cytoplasmic-facing. Residues 7-27 (LIGLINFFTFLLSIPILGGGI) traverse the membrane as a helical segment. At 28–43 (WLSSRANSTDCLRFLQ) the chain is on the extracellular side. Asn34 carries N-linked (GlcNAc...) asparagine glycosylation. The helical transmembrane segment at 44–64 (WPLIIIGISIMVISLAGIAGA) threads the bilayer. Over 65-75 (CYQNKFLMWLY) the chain is Cytoplasmic. A helical transmembrane segment spans residues 76 to 96 (LFTMFFVIAALIGFTIFAYVV). The Extracellular segment spans residues 97-235 (TDKGSGRFVM…LGSLKKSWRK (139 aa)). Asn187 is a glycosylation site (N-linked (GlcNAc...) asparagine). The helical transmembrane segment at 236-256 (VSVINIVVVIILVIFYVIACA) threads the bilayer. The Cytoplasmic portion of the chain corresponds to 257–287 (AYQNVKRMYNDEPVGEARMTNLILVIFKFKE). The helical transmembrane segment at 288 to 308 (ILVQFFFGIVFLLLFNGLMVC) threads the bilayer. The Extracellular portion of the chain corresponds to 309 to 327 (CCNDKFAFSVFFFGYVTYA).

It belongs to the tetraspanin (TM4SF) family.

Its subcellular location is the membrane. Functionally, may be involved in the regulation of cell differentiation. The sequence is that of Tetraspanin-4 (TET4) from Arabidopsis thaliana (Mouse-ear cress).